Here is a 390-residue protein sequence, read N- to C-terminus: Putative glutamate--cysteine ligase 2 (390 aa).

This sequence belongs to the glutamate--cysteine ligase type 2 family. YbdK subfamily.

The enzyme catalyses L-cysteine + L-glutamate + ATP = gamma-L-glutamyl-L-cysteine + ADP + phosphate + H(+). Functionally, ATP-dependent carboxylate-amine ligase which exhibits weak glutamate--cysteine ligase activity. This Chloroflexus aggregans (strain MD-66 / DSM 9485) protein is Putative glutamate--cysteine ligase 2.